The following is a 78-amino-acid chain: DNA-directed RNA polymerase subunit Rpo5 (78 aa).

Belongs to the archaeal Rpo5/eukaryotic RPB5 RNA polymerase subunit family. Part of the RNA polymerase complex.

It localises to the cytoplasm. The catalysed reaction is RNA(n) + a ribonucleoside 5'-triphosphate = RNA(n+1) + diphosphate. DNA-dependent RNA polymerase (RNAP) catalyzes the transcription of DNA into RNA using the four ribonucleoside triphosphates as substrates. This is DNA-directed RNA polymerase subunit Rpo5 from Methanococcoides burtonii (strain DSM 6242 / NBRC 107633 / OCM 468 / ACE-M).